A 150-amino-acid polypeptide reads, in one-letter code: Natriuretic peptides A (150 aa).

Positions 1–24 (MSSFTITVSFLLVLVFQFPGQTRA) are cleaved as a signal peptide. 2 propeptides span residues 25-122 (NPVY…AAPR) and 92-102 (DGGALGRGPWD). A disordered region spans residues 77–100 (LEVPPWTGEVNPAQRDGGALGRGP). Ser128 bears the Phosphoserine mark. Residues Cys129 and Cys145 are joined by a disulfide bond.

This sequence belongs to the natriuretic peptide family. As to quaternary structure, homodimer; disulfide-linked antiparallel dimer. In terms of processing, the precursor molecule is proteolytically cleaved by CORIN at Arg-122 to produce the atrial natriuretic peptide. Undergoes further proteolytic cleavage by unknown proteases to give rise to long-acting natriuretic peptide, vessel dilator and kaliuretic peptide. Additional processing gives rise to the auriculin and atriopeptin peptides. In the kidneys, alternative processing by an unknown protease results in the peptide urodilatin. Post-translationally, cleavage by MME initiates degradation of the factor and thereby regulates its activity. Degradation by IDE results in reduced activation of NPR1 (in vitro). During IDE degradation, the resulting products can temporarily stimulate NPR2 to produce cGMP, before the fragments are completely degraded and inactivated by IDE (in vitro). Degraded by IDE. In terms of processing, phosphorylation on Ser-128 decreases vasorelaxant activity. As to expression, brain (at protein level).

Its subcellular location is the secreted. It localises to the perikaryon. The protein localises to the cell projection. In terms of biological role, hormone that plays a key role in mediating cardio-renal homeostasis, and is involved in vascular remodeling and regulating energy metabolism. Acts by specifically binding and stimulating NPR1 to produce cGMP, which in turn activates effector proteins, such as PRKG1, that drive various biological responses. Regulates vasodilation, natriuresis, diuresis and aldosterone synthesis and is therefore essential for regulating blood pressure, controlling the extracellular fluid volume and maintaining the fluid-electrolyte balance. Also involved in inhibiting cardiac remodeling and cardiac hypertrophy by inducing cardiomyocyte apoptosis and attenuating the growth of cardiomyocytes and fibroblasts. Plays a role in female pregnancy by promoting trophoblast invasion and spiral artery remodeling in uterus, and thus prevents pregnancy-induced hypertension. In adipose tissue, acts in various cGMP- and PKG-dependent pathways to regulate lipid metabolism and energy homeostasis. This includes up-regulating lipid metabolism and mitochondrial oxygen utilization by activating the AMP-activated protein kinase (AMPK), and increasing energy expenditure by acting via MAPK11 to promote the UCP1-dependent thermogenesis of brown adipose tissue. Binds the clearance receptor NPR3 which removes the hormone from circulation. Its function is as follows. May have a role in cardio-renal homeostasis through regulation of natriuresis, diuresis, vasodilation, and inhibiting aldosterone synthesis. In vitro, promotes the production of cGMP and induces vasodilation. May promote natriuresis, at least in part, by enhancing prostaglandin E2 synthesis resulting in the inhibition of renal Na+-K+-ATPase. However reports on the involvement of this peptide in mammal blood volume and blood pressure homeostasis are conflicting; according to a report, in vivo it is not sufficient to activate cGMP and does not inhibit collecting duct transport nor effect diuresis and natriuresis. Appears to bind to specific receptors that are distinct from the receptors bound by atrial natriuretic peptide and vessel dilator. Possibly enhances protein excretion in urine by decreasing proximal tubular protein reabsorption. Functionally, may have a role in cardio-renal homeostasis through regulation of natriuresis, diuresis, and vasodilation. In vitro, promotes the production of cGMP and induces vasodilation. May promote natriuresis, at least in part, by enhancing prostaglandin E2 synthesis resulting in the inhibition of renal Na+-K+-ATPase. However reports on the involvement of this peptide in mammal blood volume and blood pressure homeostasis are conflicting; according to a report it is not sufficient to activate cGMP and does not inhibit collecting duct transport nor effect diuresis and natriuresis. Appears to bind to specific receptors that are distinct from the receptors bound by the atrial natriuretic and long-acting natriuretic peptides. Possibly functions in protein excretion in urine by maintaining the integrity of the proximal tubules and enhancing protein excretion by decreasing proximal tubular protein reabsorption. May have a role in cardio-renal homeostasis through regulation of diuresis and inhibiting aldosterone synthesis. In vitro, promotes the production of cGMP and induces vasodilation. May promote natriuresis, at least in part, by enhancing prostaglandin E2 synthesis resulting in the inhibition of renal Na+-K+-ATPase. May have a role in potassium excretion but not sodium excretion (natriuresis). Possibly enhances protein excretion in urine by decreasing proximal tubular protein reabsorption. In terms of biological role, hormone produced in the kidneys that appears to be important for maintaining cardio-renal homeostasis. Mediates vasodilation, natriuresis and diuresis primarily in the renal system, in order to maintain the extracellular fluid volume and control the fluid-electrolyte balance. Specifically binds and stimulates cGMP production by renal transmembrane receptors, likely NPR1. Urodilatin not ANP, may be the natriuretic peptide responsible for the regulation of sodium and water homeostasis in the kidney. Its function is as follows. May have a role in cardio-renal homeostasis through regulation of natriuresis and vasodilation. In vivo promotes natriuresis and in vitro, vasodilates renal artery strips. Functionally, may have a role in cardio-renal homeostasis through regulation of regulation of natriuresis and vasodilation. In vivo promotes natriuresis. In vitro, vasodilates intestinal smooth muscle but not smooth muscle strips. May have a role in cardio-renal homeostasis through regulation of natriuresis and vasodilation. In vivo promotes natriuresis. In vitro, selectively vasodilates intestinal and vascular smooth muscle strips. In terms of biological role, may have a role in cardio-renal homeostasis through regulation of natriuresis and vasodilation. In vivo promotes natriuresis. In vitro, selectively vasodilates intestinal smooth muscle but not vascular smooth muscle strips. This chain is Natriuretic peptides A (NPPA), found in Sus scrofa (Pig).